A 3630-amino-acid chain; its full sequence is Trimeric autotransporter adhesin AtaA (3630 aa).

A signal peptide spans 1 to 23 (MNKIYKVIWNATLLAWVAVSELA). The interval 24–3487 (KGKTKSTTSK…TNQAVVNYLG (3464 aa)) is surface exposed passenger domain. The segment at 108 to 315 (SIAIGENAQG…ASDAVTVAQL (208 aa)) is N-terminal YadA-like head. Residues 316–2904 (DKAYDDTNGR…GRAATEEQLK (2589 aa)) are N-terminal stalk. The tract at residues 2905–3169 (AVITSNITEV…DSDAVNVAQL (265 aa)) is C-terminal YadA-like head. The interval 3170–3561 (KAVGNQVVTT…DVEKKANAGI (392 aa)) is C-terminal stalk. The tract at residues 3539-3574 (LDNAFRITNNRIDDVEKKANAGIAAAMALESAPYVP) is outer membrane translocation of the passenger domain. Transmembrane regions (beta stranded) follow at residues 3575–3585 (GKYTYAAGAAY), 3589–3599 (ENAVGVTLRKT), 3608–3614 (TGGVAAA), and 3618–3629 (DASVRIGISGVI). The translocator domain stretch occupies residues 3575–3630 (GKYTYAAGAAYHGGENAVGVTLRKTADNGRWSITGGVAAASQGDASVRIGISGVID).

It belongs to the autotransporter-2 (AT-2) (TC 1.B.40) family. Homotrimer. Interacts with TpgA.

Its subcellular location is the cell surface. It is found in the cell outer membrane. Functionally, responsible for autoagglutination, and for adhesion to abiotic and biotic surfaces such as polystyrene (PS), type I collagen, polypropylene (PP), polyvinylchloride (PVC), glass and stainless steel (SS). Adhesion is much stronger than that mediated by Yersinia YadA in a comparative assay. Confers autoagglutination and binding to PS, type I collagen, PP, PVC, glass and SS upon expression in Acinetobacter baylyi strain ADP1. Involved in rapid, irreversible adherence to polyurethane. Forms an unusual biofilm. An extended, surface exposed fiber binds to quartz crystals, PS and glass. It can be removed by washing in distilled water. This is Trimeric autotransporter adhesin AtaA from Acinetobacter sp. (strain Tol 5).